A 425-amino-acid chain; its full sequence is Kynurenine/alpha-aminoadipate aminotransferase, mitochondrial (425 aa).

The transit peptide at Met1 to Ala29 directs the protein to the mitochondrion. Residue Arg20 coordinates substrate. Lys69 is subject to N6-acetyllysine. Residues Tyr74 and Tyr142 each coordinate substrate. The segment at Trp178–Leu208 is disordered. At Lys179 the chain carries N6-acetyllysine. Residues Pro198–Leu208 show a composition bias toward polar residues. Residue Asn202 participates in substrate binding. Lys263 carries the post-translational modification N6-(pyridoxal phosphate)lysine; alternate. Residues Lys263 and Lys339 each carry the N6-acetyllysine; alternate modification. Lys263 and Lys339 each carry N6-succinyllysine; alternate. Substrate is bound at residue Arg399. Lys422 is modified (N6-acetyllysine).

This sequence belongs to the class-I pyridoxal-phosphate-dependent aminotransferase family. In terms of assembly, homodimer. Pyridoxal 5'-phosphate is required as a cofactor.

It is found in the mitochondrion. It carries out the reaction L-kynurenine + 2-oxoglutarate = kynurenate + L-glutamate + H2O. The enzyme catalyses L-2-aminoadipate + 2-oxoglutarate = 2-oxoadipate + L-glutamate. It catalyses the reaction glycine + 2-oxoglutarate = glyoxylate + L-glutamate. The catalysed reaction is L-kynurenine + glyoxylate = kynurenate + glycine + H2O. It carries out the reaction 3-hydroxy-L-kynurenine + glyoxylate = xanthurenate + glycine + H2O. The enzyme catalyses 2-oxohexanoate + L-kynurenine = L-2-aminohexanoate + kynurenate + H2O. It catalyses the reaction 3-phenylpyruvate + L-kynurenine = kynurenate + L-phenylalanine + H2O. The catalysed reaction is 4-methylsulfanyl-2-oxobutanoate + L-kynurenine = kynurenate + L-methionine + H2O. It carries out the reaction 2-oxo-3-sulfanylpropanoate + L-kynurenine = kynurenate + L-cysteine + H2O. The enzyme catalyses indole-3-pyruvate + L-kynurenine = kynurenate + L-tryptophan + H2O. It catalyses the reaction 2-oxopentanoate + L-kynurenine = L-2-aminopentanoate + kynurenate + H2O. The catalysed reaction is 4-methyl-2-oxopentanoate + L-kynurenine = kynurenate + L-leucine + H2O. It carries out the reaction glyoxylate + L-methionine = 4-methylsulfanyl-2-oxobutanoate + glycine. The enzyme catalyses L-2-aminoadipate + glyoxylate = 2-oxoadipate + glycine. It catalyses the reaction L-tyrosine + glyoxylate = 3-(4-hydroxyphenyl)pyruvate + glycine. The catalysed reaction is glyoxylate + L-phenylalanine = 3-phenylpyruvate + glycine. It carries out the reaction L-tryptophan + glyoxylate = indole-3-pyruvate + glycine. The enzyme catalyses L-leucine + glyoxylate = 4-methyl-2-oxopentanoate + glycine. It catalyses the reaction 2-oxobutanoate + L-kynurenine = (2S)-2-aminobutanoate + kynurenate + H2O. The catalysed reaction is 2-oxoadipate + L-kynurenine = L-2-aminoadipate + kynurenate + H2O. The protein operates within amino-acid degradation; L-lysine degradation via saccharopine pathway; glutaryl-CoA from L-lysine: step 4/6. Its function is as follows. Transaminase with broad substrate specificity. Has transaminase activity towards aminoadipate, kynurenine, methionine and glutamate. Shows activity also towards tryptophan, aspartate and hydroxykynurenine. Accepts a variety of oxo-acids as amino-group acceptors, with a preference for 2-oxoglutarate, 2-oxocaproic acid, phenylpyruvate and alpha-oxo-gamma-methiol butyric acid. Can also use glyoxylate as amino-group acceptor (in vitro). The chain is Kynurenine/alpha-aminoadipate aminotransferase, mitochondrial from Bos taurus (Bovine).